The primary structure comprises 668 residues: Kelch repeat-containing protein ARB_01230 (668 aa).

An N-terminal signal peptide occupies residues methionine 1 to histidine 32. Residues alanine 33–alanine 522 lie on the Extracellular side of the membrane. An N-linked (GlcNAc...) asparagine glycan is attached at asparagine 60. Kelch repeat units lie at residues threonine 62–aspartate 108 and serine 125–proline 176. 2 N-linked (GlcNAc...) asparagine glycosylation sites follow: asparagine 251 and asparagine 291. Kelch repeat units follow at residues isoleucine 283–alanine 331, glutamine 340–serine 395, glutamine 396–threonine 445, and valine 463–alanine 509. Residues alanine 523–valine 543 traverse the membrane as a helical segment. The Cytoplasmic segment spans residues threonine 544 to glutamine 668. Positions aspartate 611–glutamate 642 are disordered.

It is found in the membrane. The protein localises to the secreted. This chain is Kelch repeat-containing protein ARB_01230, found in Arthroderma benhamiae (strain ATCC MYA-4681 / CBS 112371) (Trichophyton mentagrophytes).